The primary structure comprises 296 residues: tRNA dimethylallyltransferase (296 aa).

ATP is bound at residue 11 to 18 (GPTAVGKT). 13-18 (TAVGKT) serves as a coordination point for substrate. Residues 36 to 39 (DSQQ) form an interaction with substrate tRNA region.

The protein belongs to the IPP transferase family. As to quaternary structure, monomer. It depends on Mg(2+) as a cofactor.

The enzyme catalyses adenosine(37) in tRNA + dimethylallyl diphosphate = N(6)-dimethylallyladenosine(37) in tRNA + diphosphate. Catalyzes the transfer of a dimethylallyl group onto the adenine at position 37 in tRNAs that read codons beginning with uridine, leading to the formation of N6-(dimethylallyl)adenosine (i(6)A). In Streptococcus agalactiae serotype III (strain NEM316), this protein is tRNA dimethylallyltransferase.